Consider the following 975-residue polypeptide: Translation initiation factor IF-2 (975 aa).

Disordered stretches follow at residues 49–110 (KLSG…APKA) and 193–339 (AAAP…GRGA). Residues 63-72 (KKTAARKAAP) are compositionally biased toward basic residues. Composition is skewed to low complexity over residues 73 to 94 (KKAAVAAPVPEADASSAAAKTP), 193 to 202 (AAAPEAPAPQ), and 209 to 225 (VVGTSGVSSSATPASAP). Residues 308 to 318 (GADRGGRDFDK) show a composition bias toward basic and acidic residues. Over residues 324 to 336 (GPSAPAAGPAAAG) the composition is skewed to low complexity. In terms of domain architecture, tr-type G spans 469 to 639 (TRPPVVTVMG…KLVAEVAELK (171 aa)). Residues 478–485 (GHVDHGKT) form a G1 region. 478-485 (GHVDHGKT) contacts GTP. The segment at 503-507 (GITQH) is G2. The tract at residues 525 to 528 (DTPG) is G3. GTP-binding positions include 525 to 529 (DTPGH) and 579 to 582 (NKID). The G4 stretch occupies residues 579 to 582 (NKID). Residues 615–617 (SAL) are G5.

It belongs to the TRAFAC class translation factor GTPase superfamily. Classic translation factor GTPase family. IF-2 subfamily.

It localises to the cytoplasm. One of the essential components for the initiation of protein synthesis. Protects formylmethionyl-tRNA from spontaneous hydrolysis and promotes its binding to the 30S ribosomal subunits. Also involved in the hydrolysis of GTP during the formation of the 70S ribosomal complex. The protein is Translation initiation factor IF-2 of Bdellovibrio bacteriovorus (strain ATCC 15356 / DSM 50701 / NCIMB 9529 / HD100).